Here is a 603-residue protein sequence, read N- to C-terminus: MPRFITELKRTHSCGELTKADIGKEVVLFGWVNNRRDHGGAVFIDLRDRAGLTQVVFEEDVRPDVHELAGQLRLEYCVGVRGKVVSRGGNVNPKLRTGEIEVHASDLEIFNRSEPAPFQIEDEIDTGEEKRLQYRYLDLRRAPLQRTLMTRAKVNHLTRNYFTDKGFLELETPFMVKYTPGGARNFLVPSRLNPGKFYALAESPQLFKQLYMMAGFDRYFQIVRCFRDEDLRLDRQPEFTQIDVEMSFVEQNDVFDVMEGLVVKLWKEVLGIEIPRPFQRMPFEESMAKYGNDKPDLRFDMPHVVLTDLVRQHDGGGVPLMHEAVKAKGIVKAMRVPASANFSRTEIDKLEEYVKGMGAKGLARAKVGEGGEWTQSPLAKTITPALRQAINEACEAKPGDLLLFQFGKESVVHTVMANLRVHLAKRMGLIPEYGSGGAWRFLWVVNPPLFEYDEESGQWAAAHHAFTRPHDSDLQFLESDPGKVNCYRYDLVLNGFEIGGGSIRLHDPEVQARVFKAMGITDEEARSKFGFLLDALKMGAPPHGGIALGMDRLVMLLTGAESLRDVVAWPKTQKGTDLMTGAPGDVDARQLRELYVKSTYEPK.

Residues 205-208 (QLFK) form an aspartate region. Arg-227 contacts L-aspartate. Residues 227 to 229 (RDE) and Gln-236 contribute to the ATP site. An L-aspartate-binding site is contributed by His-463. Position 497 (Glu-497) interacts with ATP. Arg-504 lines the L-aspartate pocket. Position 549-552 (549-552 (GMDR)) interacts with ATP.

This sequence belongs to the class-II aminoacyl-tRNA synthetase family. Type 1 subfamily. Homodimer.

The protein localises to the cytoplasm. The enzyme catalyses tRNA(Asx) + L-aspartate + ATP = L-aspartyl-tRNA(Asx) + AMP + diphosphate. In terms of biological role, aspartyl-tRNA synthetase with relaxed tRNA specificity since it is able to aspartylate not only its cognate tRNA(Asp) but also tRNA(Asn). Reaction proceeds in two steps: L-aspartate is first activated by ATP to form Asp-AMP and then transferred to the acceptor end of tRNA(Asp/Asn). This chain is Aspartate--tRNA(Asp/Asn) ligase, found in Anaeromyxobacter dehalogenans (strain 2CP-1 / ATCC BAA-258).